A 215-amino-acid chain; its full sequence is ATP phosphoribosyltransferase (215 aa).

This sequence belongs to the ATP phosphoribosyltransferase family. Short subfamily. Heteromultimer composed of HisG and HisZ subunits.

It is found in the cytoplasm. The catalysed reaction is 1-(5-phospho-beta-D-ribosyl)-ATP + diphosphate = 5-phospho-alpha-D-ribose 1-diphosphate + ATP. Its pathway is amino-acid biosynthesis; L-histidine biosynthesis; L-histidine from 5-phospho-alpha-D-ribose 1-diphosphate: step 1/9. Functionally, catalyzes the condensation of ATP and 5-phosphoribose 1-diphosphate to form N'-(5'-phosphoribosyl)-ATP (PR-ATP). Has a crucial role in the pathway because the rate of histidine biosynthesis seems to be controlled primarily by regulation of HisG enzymatic activity. The chain is ATP phosphoribosyltransferase from Prochlorococcus marinus subsp. pastoris (strain CCMP1986 / NIES-2087 / MED4).